Consider the following 488-residue polypeptide: 2,3-bisphosphoglycerate-independent phosphoglycerate mutase (488 aa).

The Phosphoserine intermediate role is filled by Ser-10. Position 10 (Ser-10) interacts with Mn(2+). Substrate-binding positions include His-69, 99–100 (RD), Arg-135, Arg-142, 215–218 (RADR), and Lys-290. Mn(2+) contacts are provided by Asp-359, His-363, Asp-400, His-401, and His-430.

The protein belongs to the BPG-independent phosphoglycerate mutase family. As to quaternary structure, monomer. It depends on Mn(2+) as a cofactor.

The protein resides in the cytoplasm. It catalyses the reaction (2R)-2-phosphoglycerate = (2R)-3-phosphoglycerate. Its pathway is carbohydrate degradation; glycolysis; pyruvate from D-glyceraldehyde 3-phosphate: step 3/5. In terms of biological role, catalyzes the interconversion of 2-phosphoglycerate and 3-phosphoglycerate. The sequence is that of 2,3-bisphosphoglycerate-independent phosphoglycerate mutase from Prunus dulcis (Almond).